The sequence spans 353 residues: Guanine nucleotide-binding protein alpha-1 subunit (353 aa).

A lipid anchor (N-myristoyl glycine) is attached at G2. A lipid anchor (S-palmitoyl cysteine) is attached at C3. The G-alpha domain maps to N32 to L353. Residues K35–T48 are G1 motif. The GTP site is built by E43, S44, G45, K46, S47, T48, D150, L175, T181, G203, N269, K270, D272, and A325. A Mg(2+)-binding site is contributed by S47. Residues D173–T181 form a G2 motif region. T181 is a binding site for Mg(2+). Positions Y196–R205 are G3 motif. A G4 motif region spans residues I265 to D272. Residues T323 to T328 are G5 motif.

It belongs to the G-alpha family. As to quaternary structure, g proteins are composed of 3 units; alpha, beta and gamma. The alpha chain contains the guanine nucleotide binding site. It depends on Mg(2+) as a cofactor.

In terms of biological role, guanine nucleotide-binding proteins (G proteins) are involved as modulators or transducers in various transmembrane signaling systems. In Mycosarcoma maydis (Corn smut fungus), this protein is Guanine nucleotide-binding protein alpha-1 subunit (GPA1).